The primary structure comprises 239 residues: Mannose-binding protein A (239 aa).

Positions 1–18 are cleaved as a signal peptide; sequence MLLLPLLPVLLCVVSVSS. Positions 35–88 are disordered; sequence ACGRDGRDGPKGEKGEPGQGLRGLQGPPGKLGPPGSVGSPGSPGPKGQKGDHGD. The region spanning 37-89 is the Collagen-like domain; the sequence is GRDGRDGPKGEKGEPGQGLRGLQGPPGKLGPPGSVGSPGSPGPKGQKGDHGDN. Basic and acidic residues predominate over residues 38–50; that stretch reads RDGRDGPKGEKGE. Proline 44 bears the 4-hydroxyproline mark. Lysine 45 and lysine 48 each carry 5-hydroxylysine. 2 O-linked (Gal...) hydroxylysine glycosylation sites follow: lysine 45 and lysine 48. 5 positions are modified to 4-hydroxyproline: proline 51, proline 62, proline 68, proline 74, and proline 79. Over residues 58-74 the composition is skewed to low complexity; the sequence is LQGPPGKLGPPGSVGSP. A 5-hydroxylysine mark is found at lysine 80 and lysine 83. Lysine 80 and lysine 83 each carry an O-linked (Gal...) hydroxylysine glycan. The C-type lectin domain maps to 144-239; sequence SLCTELQGTV…SFKAVCEFPA (96 aa). Intrachain disulfides connect cysteine 146–cysteine 235 and cysteine 213–cysteine 227. The Ca(2+) site is built by aspartate 179, glutamate 183, glutamate 203, asparagine 205, glutamate 211, aspartate 212, asparagine 223, and aspartate 224. The interval 203–211 is calcium-dependent carbohydrate binding; it reads EPNNHGSGE.

As to quaternary structure, homotrimer. Forms higher oligomeric complexes formed by the association of two, three or more homotrimers. Oligomerization occurs in the endoplasmic reticulum. Interacts with MASP1 and MASP2. Hydroxylated on lysine and proline residues within the collagen-like domain. Post-translationally, O-glycosylated. O-linked glycans on hydroxylysine residues consist of Glc-Gal disaccharides bound to the oxygen atom of post-translationally added hydroxyl groups. Detected in liver and blood serum (at protein level). Detected in liver.

The protein localises to the secreted. In terms of biological role, calcium-dependent lectin. Plays a role in the innate immune response by binding mannose, fucose and N-acetylglucosamine moieties on different microorganisms and mediating activation of the lectin complement pathway. Binds to late apoptotic cells, as well as to apoptotic blebs and to necrotic cells, but not to early apoptotic cells, facilitating their uptake by macrophages. This chain is Mannose-binding protein A (Mbl1), found in Mus musculus (Mouse).